A 416-amino-acid polypeptide reads, in one-letter code: 46 kDa surface antigen (416 aa).

The first 27 residues, 1-27 (MLRKKFLYSSAIYATSLASIIAFVAAG), serve as a signal peptide directing secretion. A lipid anchor (N-palmitoyl cysteine) is attached at Cys28. Cys28 carries S-diacylglycerol cysteine lipidation.

It is found in the cell membrane. The chain is 46 kDa surface antigen (p46) from Mesomycoplasma hyopneumoniae (strain 232) (Mycoplasma hyopneumoniae).